The primary structure comprises 197 residues: MATRGGPMVAGTDGNDFEFRQRVAGTYQISLLNKSRLKYCIFFHALLFFVMLAKLTSDILDHLDIFVLEIEELEVPPPLWWEYVWAASLLTSFLGLSAARGNKVREMQKYMVAILLFAILPLFYCFAYYFSDVWEFATLDKSVELDETDIFVWRGYPYGVFWYAFCFVGFQVHGFTLYFAYNLVKAWKARTATRKFQ.

Residues 1–39 are Cytoplasmic-facing; that stretch reads MATRGGPMVAGTDGNDFEFRQRVAGTYQISLLNKSRLKY. A helical membrane pass occupies residues 40 to 60; sequence CIFFHALLFFVMLAKLTSDIL. At 61–78 the chain is on the lumenal side; it reads DHLDIFVLEIEELEVPPP. The helical transmembrane segment at 79-99 threads the bilayer; sequence LWWEYVWAASLLTSFLGLSAA. At 100-109 the chain is on the cytoplasmic side; sequence RGNKVREMQK. The chain crosses the membrane as a helical span at residues 110–130; sequence YMVAILLFAILPLFYCFAYYF. Residues 131 to 159 are Lumenal-facing; sequence SDVWEFATLDKSVELDETDIFVWRGYPYG. A helical membrane pass occupies residues 160–180; sequence VFWYAFCFVGFQVHGFTLYFA. The Cytoplasmic segment spans residues 181 to 197; sequence YNLVKAWKARTATRKFQ.

This sequence belongs to the jagunal family.

Its subcellular location is the endoplasmic reticulum membrane. Required for endoplasmic reticulum organization and proper vesicular traffic during vitellogenesis. Required for oocyte and bristle growth. This chain is Protein jagunal, found in Drosophila melanogaster (Fruit fly).